Reading from the N-terminus, the 342-residue chain is Ribosomal RNA small subunit methyltransferase C (342 aa).

The protein belongs to the methyltransferase superfamily. RsmC family. Monomer.

Its subcellular location is the cytoplasm. It carries out the reaction guanosine(1207) in 16S rRNA + S-adenosyl-L-methionine = N(2)-methylguanosine(1207) in 16S rRNA + S-adenosyl-L-homocysteine + H(+). Functionally, specifically methylates the guanine in position 1207 of 16S rRNA in the 30S particle. The protein is Ribosomal RNA small subunit methyltransferase C of Salmonella paratyphi B (strain ATCC BAA-1250 / SPB7).